The chain runs to 468 residues: Probable Xaa-Pro aminopeptidase PEPP (468 aa).

Mn(2+)-binding residues include aspartate 264, aspartate 275, glutamate 398, and glutamate 438.

This sequence belongs to the peptidase M24B family. The cofactor is Mn(2+).

It carries out the reaction Release of any N-terminal amino acid, including proline, that is linked to proline, even from a dipeptide or tripeptide.. Functionally, catalyzes the removal of a penultimate prolyl residue from the N-termini of peptides. The chain is Probable Xaa-Pro aminopeptidase PEPP (PEPP) from Paracoccidioides brasiliensis (strain Pb03).